We begin with the raw amino-acid sequence, 756 residues long: Lysyl oxidase homolog 4 (756 aa).

The signal sequence occupies residues 1–24 (MAWSPPATLFLFLLLLGQPPPSRP). SRCR domains follow at residues 32 to 133 (LRLV…VICH), 159 to 287 (VRLK…VSCV), 311 to 411 (VRLR…VRCN), and 421 to 529 (VRLA…VSCM). Disulfide bonds link Cys58–Cys122, Cys71–Cys132, Cys102–Cys112, Cys191–Cys276, Cys204–Cys286, Cys251–Cys261, Cys336–Cys400, Cys349–Cys410, Cys380–Cys390, Cys450–Cys515, Cys463–Cys528, Cys497–Cys507, Cys558–Cys564, Cys610–Cys658, Cys642–Cys648, Cys670–Cys680, and Cys717–Cys731. A glycan (N-linked (GlcNAc...) asparagine) is linked at Asn198. The segment at 533–736 (PDLVMNAQLV…WLHNCHTGNS (204 aa)) is lysyl-oxidase like. Cu cation contacts are provided by His611, His613, and His615. Residue Asn629 is glycosylated (N-linked (GlcNAc...) asparagine). A cross-link (lysine tyrosylquinone (Lys-Tyr)) is located at residues 638-674 (KASFCLEDTNCPTGLQRRYACANFGEQGVTVGCWDTY). Tyr674 is modified (2',4',5'-topaquinone).

Belongs to the lysyl oxidase family. It depends on Cu cation as a cofactor. The cofactor is lysine tyrosylquinone residue. In terms of processing, the lysine tyrosylquinone cross-link (LTQ) is generated by condensation of the epsilon-amino group of a lysine with a topaquinone produced by oxidation of tyrosine. Post-translationally, may be proteolytically cleaved by BMP1. As to expression, expressed in many tissues, the highest levels among the tissues studied being in the skeletal muscle, testis and pancreas. Expressed in cartilage.

Its subcellular location is the secreted. It localises to the extracellular space. It catalyses the reaction L-lysyl-[protein] + O2 + H2O = (S)-2-amino-6-oxohexanoyl-[protein] + H2O2 + NH4(+). With respect to regulation, inhibited by beta-aminopropionitrile (BAPN). In terms of biological role, catalyzes the oxidative deamination of lysine and hydroxylysine residues in collagen and elastin, resulting in the formation of covalent cross-linkages, and the stabilization of collagen and elastin fibers. This Homo sapiens (Human) protein is Lysyl oxidase homolog 4 (LOXL4).